Consider the following 279-residue polypeptide: MAIRNYKPTTPGRRGSSVADFAEITRSNPEKSLLRPLSKSGGRNNQGRITTRHIGGGHKRQYRVIDFRRNDKDGVNAKVAHIEYDPNRTARIALLHFLDGTKRYILAPAGLKQGNIVESGAGADIKPGNNLPLCNIPTGTVVHAIELKPGGGAKLARSAGSSVRLVAKDGPYAQLRLPSGEVRNVDARCRATIGEVGNAEQSNINWGKAGRMRWKGVRPTVRGVAMNPIDHPHGGGEGKTSGGRHPVSPWGQKEGRTRHPNKESDKLIVRRRNAGKKRK.

2 disordered regions span residues 29–53 (PEKS…TTRH) and 224–279 (VAMN…KKRK). Positions 253 to 268 (KEGRTRHPNKESDKLI) are enriched in basic and acidic residues. A compositionally biased stretch (basic residues) spans 269 to 279 (VRRRNAGKKRK).

Belongs to the universal ribosomal protein uL2 family. Part of the 50S ribosomal subunit. Forms a bridge to the 30S subunit in the 70S ribosome.

In terms of biological role, one of the primary rRNA binding proteins. Required for association of the 30S and 50S subunits to form the 70S ribosome, for tRNA binding and peptide bond formation. It has been suggested to have peptidyltransferase activity; this is somewhat controversial. Makes several contacts with the 16S rRNA in the 70S ribosome. The protein is Large ribosomal subunit protein uL2 of Leifsonia xyli subsp. xyli (strain CTCB07).